The primary structure comprises 249 residues: U2 small nuclear ribonucleoprotein A' (249 aa).

LRR repeat units lie at residues 20–41, 43–64, 65–87, and 89–110; these read KERELDLRGNKIPVIENLGATE, QFDTIDLSDNEIVKLENFPYLN, RLGTLLINNNRITRINPNLGEFL, and KLHSLVLTNNRLVNLVEIDPLA. The LRRCT domain occupies 123-161; it reads NNITKKANYRLYVIHKLKSLRVLDFIKIKAKERAEAASL.

The protein belongs to the U2 small nuclear ribonucleoprotein A family.

Its subcellular location is the nucleus. It is found in the nucleus speckle. This protein is associated with sn-RNP U2. It helps the A' protein to bind stem loop IV of U2 snRNA. This is U2 small nuclear ribonucleoprotein A' from Arabidopsis thaliana (Mouse-ear cress).